The primary structure comprises 416 residues: MTKNSSLLAEFPTCPRDEKDRPRVFTAASGAWLTDESGFRWIDFDNARGSILLGHGDPVVAEAVARAATGADGTATGWSRRVDAVLERLHALCGGEVVGLFRSGTAAVRAAVLAVREATGRPLLLSAGYHGYDPMWYPSEAPLEPNADGVVDFFFDLGLLRELLRAPERVAAVVVSPDHMHLSPGWYRELRRLCSAAGVVLVADEVKVGLRYAPGLSTAELLAPDVWVVAKGMANGHAVSAVGGSRRLLKPLKEVSFTSFFEPTILAAADAALARVATGEPQRAVREAGDRFLRHARKALDDASLPVEIAGDGTFFQFVPATEELEEALYGAANAEGLLFYAGDNQGVSAAFDEAVLGEAERRFARVCERLAPYAGGEPVGDAARYRVAWNVMDGLRQAPRDREETTGLLARLLDD.

An N6-(pyridoxal phosphate)lysine modification is found at Lys-231.

It belongs to the class-III pyridoxal-phosphate-dependent aminotransferase family. Pyridoxal 5'-phosphate serves as cofactor.

The catalysed reaction is neomycin C + 2-oxoglutarate = 6'''-deamino-6'''-oxoneomycin C + L-glutamate. It carries out the reaction neamine + 2-oxoglutarate = 6'-oxoparomamine + L-glutamate. It functions in the pathway antibiotic biosynthesis; neomycin biosynthesis. 6'-oxoglucosaminyl:L-glutamate aminotransferase that catalyzes pyridoxal-5'-phosphate-mediated transamination for the conversion of paromamine to neamine in the biosynthetic pathway of neomycin. Also able to catalyze deamination at C-6''' of neomycin. This Streptomyces fradiae (Streptomyces roseoflavus) protein is Neamine transaminase NeoN (neoN).